We begin with the raw amino-acid sequence, 197 residues long: Recombination protein RecR (197 aa).

The segment at 54-69 adopts a C4-type zinc-finger fold; that stretch reads CQQCNNYTEQTLCTLC. One can recognise a Toprim domain in the interval 77–172; it reads TLLCVVESPA…NISQLAHGIP (96 aa).

It belongs to the RecR family.

May play a role in DNA repair. It seems to be involved in an RecBC-independent recombinational process of DNA repair. It may act with RecF and RecO. This chain is Recombination protein RecR, found in Legionella pneumophila (strain Paris).